Here is a 253-residue protein sequence, read N- to C-terminus: Chromosome-partitioning ATPase Soj (253 aa).

10 residues coordinate ATP: lysine 11, glycine 12, glycine 13, valine 14, glycine 15, lysine 16, threonine 17, threonine 18, proline 211, and asparagine 213. Threonine 17 serves as a coordination point for Mg(2+).

It belongs to the ParA family.

It catalyses the reaction ATP + H2O = ADP + phosphate + H(+). In terms of biological role, ATPase probably involved in chromosome partitioning. Cooperatively binds dsDNA, forming nucleoprotein filaments in a strictly ATP-dependent fashion. The sequence is that of Chromosome-partitioning ATPase Soj from Treponema pallidum (strain Nichols).